Here is a 449-residue protein sequence, read N- to C-terminus: Phosphoglucosamine mutase (449 aa).

Residue Ser101 is the Phosphoserine intermediate of the active site. Positions 101, 242, 244, and 246 each coordinate Mg(2+). Phosphoserine is present on Ser101.

It belongs to the phosphohexose mutase family. The cofactor is Mg(2+). In terms of processing, activated by phosphorylation.

It catalyses the reaction alpha-D-glucosamine 1-phosphate = D-glucosamine 6-phosphate. Catalyzes the conversion of glucosamine-6-phosphate to glucosamine-1-phosphate. This is Phosphoglucosamine mutase from Methylocella silvestris (strain DSM 15510 / CIP 108128 / LMG 27833 / NCIMB 13906 / BL2).